The chain runs to 175 residues: Transcriptional repressor NrdR (175 aa).

The segment at 3-32 (CPYCSHPDTKVIDSRDVDDGVRRRRECVVC) is a zinc-finger region. The region spanning 47–137 (LFVVKKDQRR…VYREFTDITQ (91 aa)) is the ATP-cone domain.

Belongs to the NrdR family. Zn(2+) is required as a cofactor.

Negatively regulates transcription of bacterial ribonucleotide reductase nrd genes and operons by binding to NrdR-boxes. This is Transcriptional repressor NrdR from Dehalococcoides mccartyi (strain ATCC BAA-2266 / KCTC 15142 / 195) (Dehalococcoides ethenogenes (strain 195)).